The following is a 360-amino-acid chain: Putative agmatine deiminase (360 aa).

The active-site Amidino-cysteine intermediate is C353.

Belongs to the agmatine deiminase family.

The enzyme catalyses agmatine + H2O = N-carbamoylputrescine + NH4(+). The polypeptide is Putative agmatine deiminase (Vibrio parahaemolyticus serotype O3:K6 (strain RIMD 2210633)).